Consider the following 236-residue polypeptide: Cell division protein FtsQ (236 aa).

At 1–14 (MWDNHQALNQVADW) the chain is on the cytoplasmic side. A helical membrane pass occupies residues 15–37 (LFTLAGLTTIYLMVQWTIHLPLL). Positions 37–111 (LPLKEVHIRS…NGLDVVVEEH (75 aa)) constitute a POTRA domain. Residues 38 to 236 (PLKEVHIRSN…VSGFAARGTR (199 aa)) are Periplasmic-facing.

It belongs to the FtsQ/DivIB family. FtsQ subfamily. Part of a complex composed of FtsB, FtsL and FtsQ.

It localises to the cell inner membrane. In terms of biological role, essential cell division protein. May link together the upstream cell division proteins, which are predominantly cytoplasmic, with the downstream cell division proteins, which are predominantly periplasmic. May control correct divisome assembly. This chain is Cell division protein FtsQ, found in Nitrosospira multiformis (strain ATCC 25196 / NCIMB 11849 / C 71).